Reading from the N-terminus, the 1197-residue chain is DNA-directed RNA polymerase subunit beta (1197 aa).

Basic and acidic residues predominate over residues lysine 1172–lysine 1185. The segment at lysine 1172–glutamate 1197 is disordered. Residues alanine 1186–glutamate 1197 show a composition bias toward low complexity.

The protein belongs to the RNA polymerase beta chain family. In terms of assembly, the RNAP catalytic core consists of 2 alpha, 1 beta, 1 beta' and 1 omega subunit. When a sigma factor is associated with the core the holoenzyme is formed, which can initiate transcription.

The catalysed reaction is RNA(n) + a ribonucleoside 5'-triphosphate = RNA(n+1) + diphosphate. Functionally, DNA-dependent RNA polymerase catalyzes the transcription of DNA into RNA using the four ribonucleoside triphosphates as substrates. The polypeptide is DNA-directed RNA polymerase subunit beta (Latilactobacillus sakei subsp. sakei (strain 23K) (Lactobacillus sakei subsp. sakei)).